The chain runs to 115 residues: Guanylin (115 aa).

The first 21 residues, 1–21 (MNACVLSVLCLLGAVAVLVEG), serve as a signal peptide directing secretion. Residues 22-100 (VTVQDGDLSF…LQRLEAIAQD (79 aa)) constitute a propeptide that is removed on maturation. Cystine bridges form between Cys-69–Cys-82, Cys-104–Cys-112, and Cys-107–Cys-115.

It belongs to the guanylin family.

It localises to the secreted. In terms of biological role, endogenous activator of intestinal guanylate cyclase. It stimulates this enzyme through the same receptor binding region as the heat-stable enterotoxins. This Notomys alexis (Spinifex hopping mouse) protein is Guanylin (GUCA2A).